Reading from the N-terminus, the 260-residue chain is UPF0246 protein BPSL1241 (260 aa).

Belongs to the UPF0246 family.

In Burkholderia pseudomallei (strain K96243), this protein is UPF0246 protein BPSL1241.